Consider the following 622-residue polypeptide: Cilia- and flagella-associated protein 206 (622 aa).

It belongs to the CFAP206 family.

The protein resides in the cytoplasm. It localises to the cytoskeleton. It is found in the cilium axoneme. The protein localises to the cilium basal body. In terms of biological role, essential for sperm motility and is involved in the regulation of the beating frequency of motile cilia on the epithelial cells of the respiratory tract. Required for the establishment of radial spokes in sperm flagella. The sequence is that of Cilia- and flagella-associated protein 206 from Bos taurus (Bovine).